The primary structure comprises 145 residues: uncharacterized protein (145 aa).

The dksA C4-type zinc-finger motif lies at 86–110; sequence CERCGEEIPEPRLCAIPWTRYCAKC.

This is an uncharacterized protein from Aquifex aeolicus (strain VF5).